Here is a 374-residue protein sequence, read N- to C-terminus: DNA replication and repair protein RecF (374 aa).

34–41 provides a ligand contact to ATP; sequence GDNGAGKT.

It belongs to the RecF family.

The protein resides in the cytoplasm. Functionally, the RecF protein is involved in DNA metabolism; it is required for DNA replication and normal SOS inducibility. RecF binds preferentially to single-stranded, linear DNA. It also seems to bind ATP. The sequence is that of DNA replication and repair protein RecF from Rhizobium etli (strain ATCC 51251 / DSM 11541 / JCM 21823 / NBRC 15573 / CFN 42).